Reading from the N-terminus, the 411-residue chain is Immunity-related GTPase family M protein (411 aa).

Residues 1–21 form a disordered region; it reads MKPSHKSCEAAPLLPKMPETS. The region spanning 77–253 is the IRG-type G domain; the sequence is IPVSIFVTGD…PELRNTLQTD (177 aa). Residues 86-93, 111-115, and 193-195 each bind GTP; these read DSGNGMSS, TGVVR, and KLD. Ser-204 is subject to Phosphoserine. Residue 234–236 participates in GTP binding; it reads SNL. Residue Lys-272 forms a Glycyl lysine isopeptide (Lys-Gly) (interchain with G-Cter in ubiquitin) linkage. The alpha-K amphipathic helix stretch occupies residues 352-376; that stretch reads KLRLMTCTTVNALFCLFKFLPCLCH.

It belongs to the TRAFAC class dynamin-like GTPase superfamily. IRG family. Interacts with ULK1; promoting the coassembly of ULK1 and BECN1. Interacts with BECN1; enhancing BECN1-interacting partners and influencing the composition of the BECN1 complex. Interacts with ATG16L1. Interacts with NOD2; promoting Irgm 'Lys-63'-linked polyubiquitination, which is required for interactions with the core autophagy factors. Interacts with STX17; promoting STX17 recruitment to autophagosomes. Interacts with ATG8 proteins (GABARAP, GABARAPL1, GABARAPL2, MAP1LC3A, MAP1LC3B and MAP1LC3C); promoting STX17 recruitment to autophagosomes. Interacts with TFEB; promoting association between TFEB and PPP3CB and TFEB dephosphorylation. Interacts with PPP3CB; promoting association between TFEB and PPP3CB and TFEB dephosphorylation. Interacts with NLRP3; preventing NLRP3 inflammasome assembly and promoting SQSTM1/p62-dependent autophagic degradation of NLRP3. Interacts with CGAS; promoting SQSTM1/p62-dependent autophagic degradation of CGAS. Interacts with RIGI/RIG-I; promoting SQSTM1/p62-dependent autophagic degradation of RIGI/RIG-I. Interacts with NOD1; promoting SQSTM1/p62-dependent autophagic degradation of RIGI/RIG-I. Interacts with NOD2; promoting SQSTM1/p62-dependent autophagic degradation of RIGI/RIG-I. Interacts with RIPK2; promoting SQSTM1/p62-dependent autophagic degradation of RIGI/RIG-I. Interacts with PIK3CA. Post-translationally, palmitoylated on C-terminal Cys residues. Palmitoylation, together with the alpha-K amphipathic helix, which binds phosphatidylinositol, mediate binding to membranes. Ubiquitinated via 'Lys-63'-linked polyubiquitination in a NOD2-dependent process. 'Lys-63'-linked polyubiquitination is required for interactions with the core autophagy factors. Ubiquitination at Lys-272 by the DCX(WDR77) complex, also named CLR4(WDR77) complex, in intestinal cells, leading to its degradation by the proteasome.

Its subcellular location is the golgi apparatus membrane. It localises to the cell membrane. The protein localises to the cytoplasmic vesicle. The protein resides in the phagosome membrane. It is found in the autophagosome membrane. Its subcellular location is the lysosome membrane. It localises to the late endosome membrane. The protein localises to the mitochondrion membrane. The protein resides in the cell projection. It is found in the phagocytic cup. The enzyme catalyses GTP + H2O = GDP + phosphate + H(+). Its function is as follows. Immunity-related GTPase that plays important roles in innate immunity and inflammatory response. Acts as a dynamin-like protein that binds to intracellular membranes and promotes remodeling and trafficking of those membranes. Required for clearance of acute protozoan and bacterial infections by interacting with autophagy and lysosome regulatory proteins, thereby promoting the fusion of phagosomes with lysosomes for efficient degradation of cargo including microbes. Regulates selective autophagy, including xenophagy and mitophagy, both directly and indirectly. Directly regulates autophagy by acting as a molecular adapter that promotes the coassembly of the core autophagy machinery to mediate antimicrobial defense: Irgm (1) activates AMPK, which in turn phosphorylates ULK1 and BECN1 to induce autophagy, (2) promotes the coassembly of ULK1 and BECN1, enhancing BECN1-interacting partners and (3) influences the composition of the BECN1 complex, by competing with the negative regulators BCL2 and RUBCN, to trigger autophagy. Also activates autophagy by promoting recruitment of STX17 to autophagosomes. In collaboration with ATG8 proteins, regulate lysosomal biogenesis, a fundamental process for any autophagic pathway, by promoting TFEB dephosphorylation. Also modulates autophagy by assisting with autophagosome formation and preventing lysosomal deacidification. Regulates autophagy by affecting mitochondrial fusion and fission. Also involved in M1 macrophage activation for the production of proinflammatory cytokines. While activating autophagy, acts as a key negative regulator of the inflammatory and interferon responses both by (1) promoting mitophagy and (2) mediating autophagy-dependent degradation of effectors of the inflammatory response. Promotes degradation of damaged and IFNG/IFN-gamma-stressed mitochondria via mitophagy, preventing cytosolic release of ligands that activate inflammation. Negatively regulates interferon-signaling in hematopoietic stem cells, preserving hematopoietic stem cell number and function. Promotes expansion of activated CD4(+) T-cells by inhibiting IFNG/IFN-gamma signaling, thereby preventing Ifng-mediated cell death of CD4(+) T-cells. Acts as a suppressor of inflammation by promoting recruitment of inflammation effectors, such as CGAS, RIGI/RIG-I and NLRP3, to autophagosome membranes, leading to their SQSTM1/p62-dependent autophagic degradation. Also directly inhibits assembly of the NLRP3 inflammasome by preventing the association between NLRP3 and PYCARD. Acts as a negative regulator of antiviral innate immune response by suppressing the RIPK2-dependent pro-inflammatory response: mediates recruitment of RIPosomes, composed of RIPK2 and NOD1 or NOD2, to autophagosome membranes, promoting their SQSTM1/p62-dependent autophagic degradation. The sequence is that of Immunity-related GTPase family M protein from Rattus norvegicus (Rat).